We begin with the raw amino-acid sequence, 1311 residues long: Zinc finger protein 521 (1311 aa).

The segment at 47–67 (HSCDSCLQVFESLSDITEHKI) adopts a C2H2-type 1; degenerate zinc-finger fold. A disordered region spans residues 81–108 (DPSCSWPASSPSSKDQTSPSHGEGCDFG). Residues 83-102 (SCSWPASSPSSKDQTSPSHG) show a composition bias toward low complexity. 7 consecutive C2H2-type zinc fingers follow at residues 118-140 (YPCQFCDKSFSRLSYLKHHEQSH), 146-168 (FKCTYCSRLFKHKRSRDRHIKLH), 174-196 (YHCSECDAAFSRSDHLKIHLKTH), 202-224 (YKCAVCRRGFLSSSSLHGHMQVH), 246-269 (QKCSQCEEGFDFPEDLQKHIAECH), 281-304 (LQCMYCHELFVEETSLMNHIEQVH), and 310-332 (NSCSICSESFLTVEELYSHMDSH). Residues 357-398 (TTPDSNLSVDSSTMVEAAPPIPKSRGRKRAAQQTSDMTGPSS) are disordered. Polar residues-rich tracts occupy residues 359 to 370 (PDSNLSVDSSTM) and 387 to 398 (AQQTSDMTGPSS). The segment at 405-429 (YSCIYCNKQLFSSLAVLQIHLKTMH) adopts a C2H2-type 9; degenerate zinc-finger fold. C2H2-type zinc fingers lie at residues 437–460 (HICQYCLEVLPSLYNLNEHLKQVH), 477–500 (YQCNFCSEVVNDLNTLQEHIRCSH), and 513–536 (FFCPHCYMGFLTDSSLEEHIRQVH). A Phosphoserine modification is found at S546. Residues 560–585 (YSCSYCTNSPIFNSVLKLNKHIKENH) form a C2H2-type 13; atypical zinc finger. Phosphoserine is present on residues S605 and S608. 7 C2H2-type zinc fingers span residues 634 to 656 (YICNQCGAKYTSLDSFQTHLKTH), 664 to 686 (LTCPQCNKEFPNQESLLKHVTIH), 694 to 717 (YICESCDKQFTSVDDLQKHLLDMH), 722 to 745 (FRCTLCQEVFDSKVSIQLHLAVKH), 752 to 775 (YRCTSCNWDFRNETDLQLHVKHNH), 783 to 805 (HKCIFCGESFGTEVELQCHITTH), and 809 to 832 (YNCRFCSKAFHAVILLEKHLREKH). The disordered stretch occupies residues 863–883 (TNSQESHNSHDGSEEDVDSSE). The segment at 886–908 (YGCDICGAAYTMETLLQNHQLRD) adopts a C2H2-type 21; degenerate zinc-finger fold. 3 consecutive C2H2-type zinc fingers follow at residues 930 to 952 (YKCNVCSRTFFSENGLREHMQTH), 959 to 981 (YMCPICGERFPSLLTLTEHKVTH), and 1020 to 1042 (FRCVVCMQTVTSTLELKIHGTFH). The segment at 1065–1083 (YKCASCLKEFRSKQDLVKL) adopts a C2H2-type 25; degenerate zinc-finger fold. Residues 1105-1119 (PGLSLPPGASRPGLG) are compositionally biased toward low complexity. Residues 1105–1136 (PGLSLPPGASRPGLGQNESLSAMEGKGKAGGL) are disordered. 5 C2H2-type zinc fingers span residues 1138–1161 (TRCSSCNVKFESESELQNHIQTVH), 1195–1217 (YQCIKCQMVFYNEWDIQVHVANH), 1225–1247 (HECKLCSQTFDSPAKLQCHLIEH), 1256–1279 (FKCPVCFTVFVQANKLQQHIFSAH), and 1286–1309 (YDCTQCPQKFFFQTELQNHTMTQH). K1146 is covalently cross-linked (Glycyl lysine isopeptide (Lys-Gly) (interchain with G-Cter in SUMO2)).

It belongs to the krueppel C2H2-type zinc-finger protein family. Interacts with EBF1. Interacts with SMAD1 and SMAD4. In terms of tissue distribution, widely expressed. Expressed in all B-cell stages.

The protein resides in the nucleus. In terms of biological role, transcription factor that can both act as an activator or a repressor depending on the context. Involved in BMP signaling and in the regulation of the immature compartment of the hematopoietic system. Associates with SMADs in response to BMP2 leading to activate transcription of BMP target genes. Acts as a transcriptional repressor via its interaction with EBF1, a transcription factor involved specification of B-cell lineage; this interaction preventing EBF1 to bind DNA and activate target genes. This is Zinc finger protein 521 (Znf521) from Mus musculus (Mouse).